Here is a 435-residue protein sequence, read N- to C-terminus: Adenylosuccinate synthetase (435 aa).

Residues 11–17 (GDEGKGK) and 39–41 (GHT) contribute to the GTP site. Catalysis depends on D12, which acts as the Proton acceptor. Residues D12 and G39 each contribute to the Mg(2+) site. IMP is bound by residues 12 to 15 (DEGK), 37 to 40 (NAGH), T128, R142, Q223, T238, and R302. H40 functions as the Proton donor in the catalytic mechanism. Residue 298 to 304 (SVTGRPR) participates in substrate binding. Residues R304, 330–332 (KLD), and 412–414 (STG) each bind GTP.

The protein belongs to the adenylosuccinate synthetase family. Homodimer. Requires Mg(2+) as cofactor.

It localises to the cytoplasm. The enzyme catalyses IMP + L-aspartate + GTP = N(6)-(1,2-dicarboxyethyl)-AMP + GDP + phosphate + 2 H(+). It participates in purine metabolism; AMP biosynthesis via de novo pathway; AMP from IMP: step 1/2. Its function is as follows. Plays an important role in the de novo pathway of purine nucleotide biosynthesis. Catalyzes the first committed step in the biosynthesis of AMP from IMP. This Coxiella burnetii (strain RSA 331 / Henzerling II) protein is Adenylosuccinate synthetase.